The sequence spans 455 residues: MIEKSNNPFLSIDPIVERTKSNGEGLPLLSEKTKKGFDFTQIVVYLVGLSDGLTHLASLAIYYLFKDYFRLTPYQVSLILMYPYIPFILKPVIALITDSFSIFGMRRKPYLFLFSLFQSLNFLALAFLNLSVIQASLILFFISLCASFCTTVAEALVVESSMGQTYSQGTNKVTEFIASKAIGSLSVAYFSGYFLEKMPREYIFIATSIFPLIISLSCLFLKEKEYSTNRNIFNQLSDLIKFINTPIFLGPFLYIFVYMSGPDYDDAFFFFCTNKLGFRPSFMGTLRLTYGIASLIGIIIYRVFLKNCSLRKTLIITTLVSFPIYISPIILTEHINKFLGISNELFVLSGGFLIEAITEIQLLPLFILTANICQPGLEASVFATILSVKNLGSLTKKGTSSFITYLMKIDSYNFDNLSLYILTCGFFLLFSLTLVPLLPNEEHIEKLKNKETSKG.

8 helical membrane passes run 42-64 (IVVYLVGLSDGLTHLASLAIYYL), 84-103 (YIPFILKPVIALITDSFSIF), 110-131 (YLFLFSLFQSLNFLALAFLNLS), 137-157 (LILFFISLCASFCTTVAEALV), 177-195 (IASKAIGSLSVAYFSGYFL), 201-221 (EYIFIATSIFPLIISLSCLFL), 242-261 (FINTPIFLGPFLYIFVYMSG), and 281-301 (SFMGTLRLTYGIASLIGIIIY). An N-linked (GlcNAc...) asparagine glycan is attached at Asn-307. Helical transmembrane passes span 313–331 (TLIITTLVSFPIYISPIIL) and 347–367 (VLSGGFLIEAITEIQLLPLFI). Asn-416 carries N-linked (GlcNAc...) asparagine glycosylation. Residues 417-438 (LSLYILTCGFFLLFSLTLVPLL) traverse the membrane as a helical segment.

Belongs to the major facilitator superfamily. Folate-biopterin transporter (TC 2.A.71) family.

It localises to the cell membrane. The enzyme catalyses folate(in) + H(+)(in) = folate(out) + H(+)(out). It catalyses the reaction (6S)-5-methyl-5,6,7,8-tetrahydrofolate(in) + H(+)(in) = (6S)-5-methyl-5,6,7,8-tetrahydrofolate(out) + H(+)(out). With respect to regulation, transport of folates is inhibited by probenecid and methotrexate. Functionally, folate transporter with broad substrate specificity. Transports folic acid, folinic acid, pteroic acid, dihydropteroic acid, the folate precursor p-amino benzoic acid (pABA) and the human folate catabolite pABA monoglutamate. Can transport 5-methyltetrahydrofolate with low efficiency. The polypeptide is Folate transporter 2 (Plasmodium falciparum (isolate 3D7)).